Here is a 141-residue protein sequence, read N- to C-terminus: Large ribosomal subunit protein uL11 (141 aa).

It belongs to the universal ribosomal protein uL11 family. In terms of assembly, part of the ribosomal stalk of the 50S ribosomal subunit. Interacts with L10 and the large rRNA to form the base of the stalk. L10 forms an elongated spine to which L12 dimers bind in a sequential fashion forming a multimeric L10(L12)X complex. One or more lysine residues are methylated.

Forms part of the ribosomal stalk which helps the ribosome interact with GTP-bound translation factors. In Agathobacter rectalis (strain ATCC 33656 / DSM 3377 / JCM 17463 / KCTC 5835 / VPI 0990) (Eubacterium rectale), this protein is Large ribosomal subunit protein uL11.